The primary structure comprises 803 residues: Leucine--tRNA ligase (803 aa).

Residues 40 to 51 carry the 'HIGH' region motif; that stretch reads PYPSGAGLHVGH. A 'KMSKS' region motif is present at residues 575 to 579; the sequence is KMSKS. K578 contributes to the ATP binding site.

The protein belongs to the class-I aminoacyl-tRNA synthetase family.

It is found in the cytoplasm. The enzyme catalyses tRNA(Leu) + L-leucine + ATP = L-leucyl-tRNA(Leu) + AMP + diphosphate. In Listeria innocua serovar 6a (strain ATCC BAA-680 / CLIP 11262), this protein is Leucine--tRNA ligase.